A 306-amino-acid polypeptide reads, in one-letter code: Pantothenate kinase (306 aa).

Position 91–98 (91–98 (GSVAVGKS)) interacts with ATP.

This sequence belongs to the prokaryotic pantothenate kinase family.

The protein localises to the cytoplasm. The enzyme catalyses (R)-pantothenate + ATP = (R)-4'-phosphopantothenate + ADP + H(+). It participates in cofactor biosynthesis; coenzyme A biosynthesis; CoA from (R)-pantothenate: step 1/5. This chain is Pantothenate kinase, found in Streptococcus pneumoniae (strain 70585).